The following is a 946-amino-acid chain: Bifunctional glutamine synthetase adenylyltransferase/adenylyl-removing enzyme (946 aa).

An adenylyl removase region spans residues 1–440; sequence MKPLSSPLQQ…VFNELIGDDE (440 aa). Positions 449 to 946 are adenylyl transferase; it reads SEQWRELWQD…ASWQKWLVEE (498 aa).

It belongs to the GlnE family. It depends on Mg(2+) as a cofactor.

It carries out the reaction [glutamine synthetase]-O(4)-(5'-adenylyl)-L-tyrosine + phosphate = [glutamine synthetase]-L-tyrosine + ADP. The enzyme catalyses [glutamine synthetase]-L-tyrosine + ATP = [glutamine synthetase]-O(4)-(5'-adenylyl)-L-tyrosine + diphosphate. Functionally, involved in the regulation of glutamine synthetase GlnA, a key enzyme in the process to assimilate ammonia. When cellular nitrogen levels are high, the C-terminal adenylyl transferase (AT) inactivates GlnA by covalent transfer of an adenylyl group from ATP to specific tyrosine residue of GlnA, thus reducing its activity. Conversely, when nitrogen levels are low, the N-terminal adenylyl removase (AR) activates GlnA by removing the adenylyl group by phosphorolysis, increasing its activity. The regulatory region of GlnE binds the signal transduction protein PII (GlnB) which indicates the nitrogen status of the cell. The sequence is that of Bifunctional glutamine synthetase adenylyltransferase/adenylyl-removing enzyme from Escherichia coli O9:H4 (strain HS).